Consider the following 159-residue polypeptide: Ribosomal RNA large subunit methyltransferase H (159 aa).

Residues I75, G108, and 127 to 132 each bind S-adenosyl-L-methionine; that span reads FGRMTL.

It belongs to the RNA methyltransferase RlmH family. In terms of assembly, homodimer.

The protein localises to the cytoplasm. The enzyme catalyses pseudouridine(1915) in 23S rRNA + S-adenosyl-L-methionine = N(3)-methylpseudouridine(1915) in 23S rRNA + S-adenosyl-L-homocysteine + H(+). Functionally, specifically methylates the pseudouridine at position 1915 (m3Psi1915) in 23S rRNA. This chain is Ribosomal RNA large subunit methyltransferase H, found in Lactococcus lactis subsp. lactis (strain IL1403) (Streptococcus lactis).